The primary structure comprises 82 residues: Small ribosomal subunit protein bS16 (82 aa).

Belongs to the bacterial ribosomal protein bS16 family.

The chain is Small ribosomal subunit protein bS16 from Vibrio vulnificus (strain CMCP6).